The sequence spans 276 residues: MALLSFERKYRVRGGTLIGGDLFDFWVGPFYVGFFGVTTLLFTVLGTALIVWGAALGPSWTFWQISINPPDVSYGLAMAPMAKGGLWQIITFSAIGAFVSWALREVEICRKLGIGYHIPFAFGFAILAYVSLVVIRPVMMGAWGYGFPYGFMTHLDWVSNTGYQYANFHYNPAHMLGITLFFTTCLALALHGSLILSAANPGKGEVVKGPEHENTYFQDTIGYSVGTLGIHRVGLILALSAVVWSIICMILSGPIYTGSWPDWWLWWQKLPFWNHG.

Helical transmembrane passes span 33-56 (GFFG…GAAL), 85-113 (GLWQ…RKLG), and 116-141 (YHIP…VMMG). (7R,8Z)-bacteriochlorophyll b contacts are provided by His154 and His174. Residues 171–200 (NPAHMLGITLFFTTCLALALHGSLILSAAN) traverse the membrane as a helical segment. His191 contributes to the Fe cation binding site. Phe217 is a binding site for a ubiquinone. A helical membrane pass occupies residues 226–252 (GTLGIHRVGLILALSAVVWSIICMILS). His231 lines the Fe cation pocket.

It belongs to the reaction center PufL/M/PsbA/D family. In terms of assembly, reaction center is composed of four bacteriochlorophylls, two bacteriopheophytins, two ubiquinones, one iron, and three highly hydrophobic polypeptide chains (designated L, M, and H).

Its subcellular location is the cellular chromatophore membrane. Functionally, the reaction center is a membrane-bound complex that mediates the initial photochemical event in the electron transfer process of photosynthesis. The protein is Reaction center protein L chain (pufL) of Rhodospirillum rubrum.